Reading from the N-terminus, the 361-residue chain is UDP-3-O-acylglucosamine N-acyltransferase (361 aa).

His258 acts as the Proton acceptor in catalysis.

The protein belongs to the transferase hexapeptide repeat family. LpxD subfamily. As to quaternary structure, homotrimer.

The catalysed reaction is a UDP-3-O-[(3R)-3-hydroxyacyl]-alpha-D-glucosamine + a (3R)-hydroxyacyl-[ACP] = a UDP-2-N,3-O-bis[(3R)-3-hydroxyacyl]-alpha-D-glucosamine + holo-[ACP] + H(+). It functions in the pathway bacterial outer membrane biogenesis; LPS lipid A biosynthesis. Functionally, catalyzes the N-acylation of UDP-3-O-acylglucosamine using 3-hydroxyacyl-ACP as the acyl donor. Is involved in the biosynthesis of lipid A, a phosphorylated glycolipid that anchors the lipopolysaccharide to the outer membrane of the cell. The polypeptide is UDP-3-O-acylglucosamine N-acyltransferase (Nitrobacter hamburgensis (strain DSM 10229 / NCIMB 13809 / X14)).